The following is a 550-amino-acid chain: Arginine--tRNA ligase (550 aa).

A 'HIGH' region motif is present at residues 130 to 140 (ANPTGPIHIGG).

It belongs to the class-I aminoacyl-tRNA synthetase family. As to quaternary structure, monomer.

Its subcellular location is the cytoplasm. The enzyme catalyses tRNA(Arg) + L-arginine + ATP = L-arginyl-tRNA(Arg) + AMP + diphosphate. This chain is Arginine--tRNA ligase, found in Mycobacterium ulcerans (strain Agy99).